The primary structure comprises 212 residues: Thymidylate kinase (212 aa).

Residue 13–20 (GLEGAGKS) participates in ATP binding.

The protein belongs to the thymidylate kinase family.

The enzyme catalyses dTMP + ATP = dTDP + ADP. Functionally, phosphorylation of dTMP to form dTDP in both de novo and salvage pathways of dTTP synthesis. The chain is Thymidylate kinase from Legionella pneumophila (strain Corby).